A 167-amino-acid polypeptide reads, in one-letter code: Translationally-controlled tumor protein homolog (167 aa).

Residues 1–167 enclose the TCTP domain; sequence MIIYTDIISG…WKHGVKAEKI (167 aa).

It belongs to the TCTP family.

It localises to the cytoplasm. Its subcellular location is the cytoskeleton. In terms of biological role, involved in protein synthesis. Involved in microtubule stabilization. This is Translationally-controlled tumor protein homolog from Kluyveromyces lactis (strain ATCC 8585 / CBS 2359 / DSM 70799 / NBRC 1267 / NRRL Y-1140 / WM37) (Yeast).